The sequence spans 407 residues: Substance-P receptor (407 aa).

Residues 1 to 31 (MDNVLPVDSDLFPNISTNTSEPNQFVQPAWQ) lie on the Extracellular side of the membrane. N-linked (GlcNAc...) asparagine glycosylation is found at N14 and N18. Residues 32 to 54 (IVLWAAAYTVIVVTSVVGNVVVM) traverse the membrane as a helical segment. Over 55-64 (WIILAHKRMR) the chain is Cytoplasmic. A helical transmembrane segment spans residues 65-86 (TVTNYFLVNLAFAEASMAAFNT). The Extracellular portion of the chain corresponds to 87-106 (VVNFTYAVHNEWYYGLFYCK). A disulfide bridge connects residues C105 and C180. A helical transmembrane segment spans residues 107–128 (FHNFFPIAAVFASIYSMTAVAF). Topologically, residues 129 to 148 (DRYMAIIHPLQPRLSATATK) are cytoplasmic. The helical transmembrane segment at 149–169 (VVICVIWVLALLLAFPQGYYS) threads the bilayer. Topologically, residues 170–194 (TTETMPGRVVCMIEWPSHPDKIYEK) are extracellular. A helical membrane pass occupies residues 195–219 (VYHICVTVLIYFLPLLVIGYAYTVV). Over 220–248 (GITLWASEIPGDSSDRYHEQVSAKRKVVK) the chain is Cytoplasmic. The helical transmembrane segment at 249–270 (MMIVVVCTFAICWLPFHIFFLL) threads the bilayer. Over 271–283 (PYINPDLYLKKFI) the chain is Extracellular. Residues 284 to 308 (QQVYLAIMWLAMSSTMYNPIIYCCL) traverse the membrane as a helical segment. Residues 309–407 (NDRFRLGFKH…SSSFYSNMLS (99 aa)) are Cytoplasmic-facing. The S-palmitoyl cysteine moiety is linked to residue C322. The disordered stretch occupies residues 363–407 (GAHEEDPEEGPKATPSSLDLTSNGSSRSNSKTVTESSSFYSNMLS). The segment covering 376–407 (TPSSLDLTSNGSSRSNSKTVTESSSFYSNMLS) has biased composition (polar residues).

Belongs to the G-protein coupled receptor 1 family. In terms of assembly, interacts with ARRB1.

The protein localises to the cell membrane. In terms of biological role, this is a receptor for the tachykinin neuropeptide substance P. It is probably associated with G proteins that activate a phosphatidylinositol-calcium second messenger system. The rank order of affinity of this receptor to tachykinins is: substance P &gt; substance K &gt; neuromedin-K. This is Substance-P receptor (TACR1) from Cavia porcellus (Guinea pig).